The chain runs to 218 residues: Large ribosomal subunit protein uL4 (218 aa).

Residues 54-106 (GTHAVKNRGAVSGGGRKPWKQKGTGRARQGSIRAPQWYHGGVAHGPVPRDYSQ) form a disordered region.

Belongs to the universal ribosomal protein uL4 family. As to quaternary structure, part of the 50S ribosomal subunit.

Its function is as follows. One of the primary rRNA binding proteins, this protein initially binds near the 5'-end of the 23S rRNA. It is important during the early stages of 50S assembly. It makes multiple contacts with different domains of the 23S rRNA in the assembled 50S subunit and ribosome. Functionally, forms part of the polypeptide exit tunnel. In Bifidobacterium animalis subsp. lactis (strain AD011), this protein is Large ribosomal subunit protein uL4.